We begin with the raw amino-acid sequence, 543 residues long: Chaperonin GroEL (543 aa).

ATP contacts are provided by residues 29–32 (TLGP), 86–90 (DGTTT), Gly-413, 477–479 (DAL), and Asp-493. Residues 524 to 543 (EKDKPEMPGGAPGMGMGGMY) are disordered. The span at 533–543 (GAPGMGMGGMY) shows a compositional bias: gly residues.

This sequence belongs to the chaperonin (HSP60) family. Forms a cylinder of 14 subunits composed of two heptameric rings stacked back-to-back. Interacts with the co-chaperonin GroES.

It is found in the cytoplasm. The enzyme catalyses ATP + H2O + a folded polypeptide = ADP + phosphate + an unfolded polypeptide.. Together with its co-chaperonin GroES, plays an essential role in assisting protein folding. The GroEL-GroES system forms a nano-cage that allows encapsulation of the non-native substrate proteins and provides a physical environment optimized to promote and accelerate protein folding. This chain is Chaperonin GroEL, found in Clostridium acetobutylicum (strain ATCC 824 / DSM 792 / JCM 1419 / IAM 19013 / LMG 5710 / NBRC 13948 / NRRL B-527 / VKM B-1787 / 2291 / W).